The sequence spans 421 residues: Odorant receptor 67b (421 aa).

At 1–48 the chain is on the cytoplasmic side; that stretch reads MQDQLDHELERIDKLPKLGLLWVEYSAYALGVNIAPRKRSSKYCRLTR. The helical transmembrane segment at 49 to 69 threads the bilayer; the sequence is ILVLIVNLSIIYSLVAFIMEN. The Extracellular portion of the chain corresponds to 70–71; sequence YM. The helical transmembrane segment at 72–92 threads the bilayer; that stretch reads ISFETYVEAVLLTFQLSVGVV. Residues 93 to 151 lie on the Cytoplasmic side of the membrane; it reads KMFHFQNKVESCSQLVFSTETGEVLKSLGLFQLDLPRKKELLSSVSLILLNNWMIIDRQ. Residues 152–172 traverse the membrane as a helical segment; that stretch reads VMFFFKIVCMPVLYYCVRPYF. The Extracellular portion of the chain corresponds to 173 to 217; the sequence is QYIFDCYIKDKDTCEMTLTYPAIVPYLQLGNYEFPSYVIRFFLLQ. A helical transmembrane segment spans residues 218–238; it reads SGPLWCFFAVFGFNSLFVVLT. Topologically, residues 239–289 are cytoplasmic; it reads RYESGLIKVLRFLVQNSTSDILVPKDQRVKYLQCCVRLFARISSHHNQIEN. A helical transmembrane segment spans residues 290–310; it reads LFKYIILVQCSVSSILICMLL. Residues 311-315 are Extracellular-facing; sequence YKIST. A helical transmembrane segment spans residues 316–336; that stretch reads VLEVGWVWMGMIMVYFVTIAL. Over 337 to 384 the chain is Cytoplasmic; that stretch reads EITLYNVSAQKVESQSELLFHDWYNCSWYNESREFKFMIKMMLLFSRR. Residues 385 to 405 form a helical membrane-spanning segment; that stretch reads TFVLSVGGFTSLSHKFLVQVF. The Extracellular segment spans residues 406–421; it reads RLSANFFLLLRNMNNK.

Belongs to the insect chemoreceptor superfamily. Heteromeric odorant receptor channel (TC 1.A.69) family. Or63a subfamily. Interacts with Orco. Complexes exist early in the endomembrane system in olfactory sensory neurons (OSNs), coupling these complexes to the conserved ciliary trafficking pathway.

It is found in the cell membrane. Odorant receptor which mediates acceptance or avoidance behavior, depending on its substrates. The odorant receptor repertoire encodes a large collection of odor stimuli that vary widely in identity, intensity, and duration. May form a complex with Orco to form odorant-sensing units, providing sensitive and prolonged odorant signaling and calcium permeability. Involved in the behavioral responses to ethyl acetate, pentyl acetate, methyl caproate, anisole, heptanal, 2-heptanone, r-carvone, nonanoic acid, and pyrazines. This is Odorant receptor 67b (Or67b) from Drosophila melanogaster (Fruit fly).